A 645-amino-acid chain; its full sequence is Threonine--tRNA ligase (645 aa).

The TGS domain maps to M1–T62. A catalytic region spans residues D242–P541. Residues C336, H387, and H518 each coordinate Zn(2+).

It belongs to the class-II aminoacyl-tRNA synthetase family. As to quaternary structure, homodimer. It depends on Zn(2+) as a cofactor.

It localises to the cytoplasm. The catalysed reaction is tRNA(Thr) + L-threonine + ATP = L-threonyl-tRNA(Thr) + AMP + diphosphate + H(+). Functionally, catalyzes the attachment of threonine to tRNA(Thr) in a two-step reaction: L-threonine is first activated by ATP to form Thr-AMP and then transferred to the acceptor end of tRNA(Thr). Also edits incorrectly charged L-seryl-tRNA(Thr). This is Threonine--tRNA ligase from Enterococcus faecalis (strain ATCC 700802 / V583).